Here is a 1951-residue protein sequence, read N- to C-terminus: Sodium channel protein type 3 subunit alpha (1951 aa).

At 1 to 128 the chain is on the cytoplasmic side; it reads MAQALLVPPG…KIAIKILVHS (128 aa). Residues 28–60 form a disordered region; it reads RAAEEKAKKPKKEQDIDDENKPKPNSDLEAGKN. Basic and acidic residues predominate over residues 46-57; it reads ENKPKPNSDLEA. An I repeat occupies 110–455; that stretch reads ILTPLNPVRK…QQMLEQLKKQ (346 aa). The chain crosses the membrane as a helical span at residues 129-146; sequence LFSMLIMCTILTNCVFMT. Residues 147-152 are Extracellular-facing; that stretch reads LSNPPD. Residues 153 to 174 traverse the membrane as a helical segment; sequence WTKNVEYTFTGIYTFESLIKIL. Residues 175–188 are Cytoplasmic-facing; that stretch reads ARGFCLEDFTFLRD. A helical membrane pass occupies residues 189–206; that stretch reads PWNWLDFSVIVMAYVTEF. Over 207–213 the chain is Extracellular; the sequence is VDLGNVS. An N-linked (GlcNAc...) asparagine glycan is attached at N211. The chain crosses the membrane as a helical span at residues 214–235; the sequence is ALRTFRVLRALKTISVIPGLKT. The Cytoplasmic segment spans residues 236-249; sequence IVGALIQSVKKLSD. Residues 250 to 269 traverse the membrane as a helical segment; it reads VMILTVFCLSVFALIGLQLF. Residues 270-369 are Extracellular-facing; that stretch reads MGNLRNKCSQ…NYGYTSFDTF (100 aa). N-linked (GlcNAc...) asparagine glycans are attached at residues N290, N296, N302, N307, and N339. Positions 370-386 form an intramembrane region, pore-forming; that stretch reads SWAFLSLFRLMTQDYWE. The Extracellular segment spans residues 387–397; the sequence is NLYQLTLRAAG. Residues 398-424 form a helical membrane-spanning segment; that stretch reads KTYMIFFVLVIFLGSFYLVNLILAVVA. At 425–712 the chain is on the cytoplasmic side; sequence MAYEEQNQAT…LVNLIVMDPF (288 aa). Phosphoserine occurs at positions 484, 485, and 486. Disordered regions lie at residues 493–529 and 587–633; these read SKSA…SESE and VGSE…TEVR. Basic residues predominate over residues 500–509; it reads RNRRKKRRQR. 2 stretches are compositionally biased toward basic and acidic residues: residues 510-529 and 596-622; these read EHLE…SESE and DEHS…ERRN. Residues 693–965 form an II repeat; it reads CCDAWLKVKH…QIAVGRMQKG (273 aa). The helical transmembrane segment at 713–730 threads the bilayer; sequence VDLAITICIVLNTLFMAM. The Extracellular segment spans residues 731–738; it reads EHYPMTQQ. A helical transmembrane segment spans residues 739–763; sequence FSSVLTVGNLVFTGIFTAEMVLKII. At 764 to 773 the chain is on the cytoplasmic side; sequence AMDPYYYFQE. Residues 774–793 traverse the membrane as a helical segment; sequence GWNIFDGIIVSLSLMELGLA. At 794 to 797 the chain is on the extracellular side; the sequence is NVEG. Residues 798–816 form a helical membrane-spanning segment; it reads LSVLRSFRLLRVFKLAKSW. The Cytoplasmic portion of the chain corresponds to 817-834; sequence PTLNMLIKIIGNSVGALG. The chain crosses the membrane as a helical span at residues 835–855; that stretch reads NLTLVLAIIVFIFAVVGMQLF. Over 856-880 the chain is Extracellular; that stretch reads GKSYKECVCKINVDCKLPRWHMNDF. A disulfide bond links C864 and C870. Positions 881 to 896 form an intramembrane region, pore-forming; sequence FHSFLIVFRVLCGEWI. Residues 897–907 lie on the Extracellular side of the membrane; that stretch reads ETMWDCMEVAG. A disulfide bridge links C902 with C911. A helical transmembrane segment spans residues 908-934; that stretch reads QTMCLIVFMLVMVIGNLVVLNLFLALL. The Cytoplasmic segment spans residues 935 to 1156; it reads LSSFSSDNLA…RKTCYSIVEH (222 aa). The tract at residues 1068–1112 is disordered; it reads TEEFSSESELEESKEKLNATSSSEGSTVDVAPPREGEQAEIEPEE. An III repeat occupies 1139 to 1450; that stretch reads KGKIWWNLRK…KKYYNAMKKL (312 aa). A helical transmembrane segment spans residues 1157-1177; the sequence is NWFETFIVFMILLSSGALAFE. Residues 1178-1189 are Extracellular-facing; that stretch reads DIYIEQRKTIKT. Residues 1190–1211 traverse the membrane as a helical segment; it reads MLEYADKVFTYIFILEMLLKWV. Residues 1212 to 1217 lie on the Cytoplasmic side of the membrane; it reads AYGFQT. A helical transmembrane segment spans residues 1218 to 1243; that stretch reads YFTNAWCWLDFLIVDVSLVSLVANAL. At 1244 to 1252 the chain is on the extracellular side; it reads GYSELGAIK. The chain crosses the membrane as a helical span at residues 1253–1271; it reads SLRTLRALRPLRALSRFEG. At 1272-1284 the chain is on the cytoplasmic side; that stretch reads MRVVVNALVGAIP. A helical transmembrane segment spans residues 1285–1307; sequence SIMNVLLVCLIFWLIFSIMGVNL. The Extracellular segment spans residues 1308–1353; it reads FAGKFYHCVNTTTGNMFEIKEVNNFSDCQALGKQARWKNVKVNFDN. Residues C1315 and C1335 are joined by a disulfide bond. N-linked (GlcNAc...) asparagine glycosylation is found at N1317 and N1331. Residues 1354 to 1370 constitute an intramembrane region (pore-forming); that stretch reads VGAGYLALLQVATFKGW. Residues 1371-1393 are Extracellular-facing; sequence MDIMYAAVDSRDVKLQPIYEENL. A helical membrane pass occupies residues 1394–1419; that stretch reads YMYLYFVIFIIFGSFFTLNLFIGVII. The Cytoplasmic portion of the chain corresponds to 1420-1477; the sequence is DNFNQQKKKFGGQDIFMTEEQKKYYNAMKKLGSKKPQKPIPRPANKFQGMVFDFVTRQ. S1452 carries the phosphoserine; by PKC modification. One copy of the IV repeat lies at 1459-1757; it reads IPRPANKFQG…WEKFDPDATQ (299 aa). A helical transmembrane segment spans residues 1478-1496; it reads VFDISIMILICLNMVTMMV. The Extracellular portion of the chain corresponds to 1497–1504; the sequence is ETDDQSKY. A helical transmembrane segment spans residues 1505-1528; sequence MTLVLSRINLVFIVLFTGEFLLKL. The Cytoplasmic portion of the chain corresponds to 1529-1538; sequence ISLRYYYFTI. Residues 1539–1556 form a helical membrane-spanning segment; sequence GWNIFDFVVVILSIVGMF. The Extracellular segment spans residues 1557 to 1568; it reads LAELIEKYFVSP. A helical membrane pass occupies residues 1569-1591; sequence TLFRVIRLARIGRILRLIKGAKG. The Cytoplasmic portion of the chain corresponds to 1592–1604; the sequence is IRTLLFALMMSLP. Residues 1605-1628 form a helical membrane-spanning segment; that stretch reads ALFNIGLLLFLVMFIYAIFGMSNF. Topologically, residues 1629–1650 are extracellular; that stretch reads AYVKKEAGIDDMFNFETFGNSM. An intramembrane region (pore-forming) is located at residues 1651–1663; sequence ICLFQITTSAGWD. Over 1664-1695 the chain is Extracellular; the sequence is GLLAPILNSAPPDCDPDAIHPGSSVKGDCGNP. A helical membrane pass occupies residues 1696-1721; that stretch reads SVGIFFFVSYIIISFLVVVNMYIAVI. The Cytoplasmic portion of the chain corresponds to 1722 to 1951; the sequence is LENFSVATEE…KGKEVRENQK (230 aa). Residues 1851–1880 form the IQ domain; the sequence is EEVSAAIIQRNYRCYLLKQRLKNISSKYDK. The interval 1898 to 1951 is disordered; the sequence is DKLNGNSTPEKTDGSSSTTSPPSYDSVTKPDKEKFEKDKPEKEIKGKEVRENQK. Residues 1925 to 1951 show a composition bias toward basic and acidic residues; the sequence is TKPDKEKFEKDKPEKEIKGKEVRENQK.

This sequence belongs to the sodium channel (TC 1.A.1.10) family. Nav1.3/SCN3A subfamily. In terms of assembly, heterooligomer of an alpha subunit, SCN3A, and 1 to 3 regulatory beta subunits including SCN1B and SCN2B; disulfide-linked with some beta subunits like SCN2B. Interacts with NEDD4L; could regulate expression of SCN3A at the plasma membrane through ubiquitination-regulated endocytosis. Interacts with the conotoxin GVIIJ. Interacts with the spider beta/delta-theraphotoxin-Pre1a. Interacts with the spider RTX-VII toxin (AC P0DL75). Post-translationally, may be ubiquitinated by NEDD4L; which would promote its endocytosis. In terms of processing, phosphorylation at Ser-1452 by PKC in a highly conserved cytoplasmic loop slows inactivation of the sodium channel and reduces peak sodium currents.

It is found in the cell membrane. The protein resides in the basal cell membrane. The catalysed reaction is Na(+)(in) = Na(+)(out). Its function is as follows. Pore-forming subunit of Nav1.3, a voltage-gated sodium (Nav) channel that directly mediates the depolarizing phase of action potentials in excitable membranes. Navs, also called VGSCs (voltage-gated sodium channels) or VDSCs (voltage-dependent sodium channels), operate by switching between closed and open conformations depending on the voltage difference across the membrane. In the open conformation they allow Na(+) ions to selectively pass through the pore, along their electrochemical gradient. The influx of Na+ ions provokes membrane depolarization, initiating the propagation of electrical signals throughout cells and tissues. In some secretory cell types, it also participates in cell excitability through membrane depolarization and regulates cells responsiveness to stimuli triggering secretion. For instance, it controls the release of serotonin/5-hydroxytryptamine by enterochromaffin cells and is required for both glucagon- and glucose-induced insulin secretion in pancreatic endocrine cells. In Rattus norvegicus (Rat), this protein is Sodium channel protein type 3 subunit alpha.